The chain runs to 207 residues: Large ribosomal subunit protein uL4 (207 aa).

A disordered region spans residues 49 to 73 (AKKRGEVSGGGKKPWKQKGGGRARA).

Belongs to the universal ribosomal protein uL4 family. Part of the 50S ribosomal subunit.

Its function is as follows. One of the primary rRNA binding proteins, this protein initially binds near the 5'-end of the 23S rRNA. It is important during the early stages of 50S assembly. It makes multiple contacts with different domains of the 23S rRNA in the assembled 50S subunit and ribosome. Forms part of the polypeptide exit tunnel. This is Large ribosomal subunit protein uL4 from Helicobacter hepaticus (strain ATCC 51449 / 3B1).